Here is a 514-residue protein sequence, read N- to C-terminus: MSTKNNSNVPEISDEEFYKNRLLTVTEQLKDNVQVYPHKYEVNYRFKDIFTFKDASEEDLKKVKVQSAGRILNFRIHARYSFFQVMSEDFTIQLVVDAQVLENKDIISNIKRGDIVGFSGVLGRTKTKEFSVFIKELSILTPCLRTIPTDYYGLKDPEIIYRKRYLDLLINKESKNRFIQRTNIIKFIRKYLDDKDFVEVETPLLNIIPTGAAAKPFTTHHNELKMNLFLRIAPELYLKKLVIGGMDRVYEIGKLFRNEGIDLTHNPEFTACEFYMAYADYNDMMNMAEEMLNGMCKYLHGSEKIVYAPNKREKEVKPVEINFARPFARFHMLEELSKVVGIKLDGLNINSDETLDLLIETCDKYEIKVEQPKTLTRVLDKLVGHFIEPKCINPSFIIGYPLVTSPLAKNHRSEAGMVERFELFINGKEICNAYTELNNPIEQRMRFKMQAQDINDGDDEAMITDEDFCVALEYGLPPTGGFGMGIDRLTMFMTDAANIKDVILFPAMKPESDN.

It belongs to the class-II aminoacyl-tRNA synthetase family. In terms of assembly, homodimer.

The protein resides in the cytoplasm. The catalysed reaction is tRNA(Lys) + L-lysine + ATP = L-lysyl-tRNA(Lys) + AMP + diphosphate. The protein is Probable lysine--tRNA ligase, cytoplasmic of Vairimorpha ceranae (strain BRL01) (Microsporidian parasite).